The sequence spans 231 residues: Large ribosomal subunit protein uL1 (231 aa).

It belongs to the universal ribosomal protein uL1 family. Part of the 50S ribosomal subunit.

Functionally, binds directly to 23S rRNA. The L1 stalk is quite mobile in the ribosome, and is involved in E site tRNA release. Protein L1 is also a translational repressor protein, it controls the translation of the L11 operon by binding to its mRNA. The protein is Large ribosomal subunit protein uL1 of Desulforudis audaxviator (strain MP104C).